We begin with the raw amino-acid sequence, 323 residues long: MMKNETSNFQIGRFLIEQRSFIALIILIAIVSMINPDFFSVDNILNILRQTSVNAIIAVGMTFVILIAGIDLSVGSVLALTGAIAASMVSIELPIFLVIPVVLLIGTLLGGISGVIVAKGKVQAFIATLVTMTLLRGITMVYTDGRPITTGFSDNADLFASIGTGYVLGIPVPIWIMSIVFAVAWYILKDTPIGRYIYALGGNEAATQLSGINVNKIKVFVFAVSGFLSALAGLIVTSRLSSAQPTAGVSYELDAIAAVVVGGTSLMGGKGRVMGTLIGALIIGFLNNALNLLDISSYYQMIAKALVILVAVLADNYLGTKKL.

The next 7 membrane-spanning stretches (helical) occupy residues 21 to 41 (FIALIILIAIVSMINPDFFSV), 55 to 75 (AIIAVGMTFVILIAGIDLSVG), 95 to 115 (IFLVIPVVLLIGTLLGGISGV), 122 to 142 (VQAFIATLVTMTLLRGITMVY), 167 to 187 (VLGIPVPIWIMSIVFAVAWYI), 217 to 237 (IKVFVFAVSGFLSALAGLIVT), and 273 to 293 (VMGTLIGALIIGFLNNALNLL).

The protein belongs to the binding-protein-dependent transport system permease family. AraH/RbsC subfamily. As to quaternary structure, the complex is composed of an ATP-binding protein (RbsA), two transmembrane proteins (RbsC) and a solute-binding protein (RbsB).

It localises to the cell inner membrane. In terms of biological role, part of the ABC transporter complex RbsABC involved in ribose import. Probably responsible for the translocation of the substrate across the membrane. This chain is Ribose import permease protein RbsC (rbsC), found in Haemophilus influenzae (strain ATCC 51907 / DSM 11121 / KW20 / Rd).